A 103-amino-acid polypeptide reads, in one-letter code: Small ribosomal subunit protein uS10 (103 aa).

Belongs to the universal ribosomal protein uS10 family. As to quaternary structure, part of the 30S ribosomal subunit.

In terms of biological role, involved in the binding of tRNA to the ribosomes. This chain is Small ribosomal subunit protein uS10, found in Neorickettsia sennetsu (strain ATCC VR-367 / Miyayama) (Ehrlichia sennetsu).